A 436-amino-acid polypeptide reads, in one-letter code: Trigger factor (436 aa).

The PPIase FKBP-type domain occupies 161-246; sequence EDQLNIDFVG…VNTVSEPKLP (86 aa).

Belongs to the FKBP-type PPIase family. Tig subfamily.

It is found in the cytoplasm. The catalysed reaction is [protein]-peptidylproline (omega=180) = [protein]-peptidylproline (omega=0). Its function is as follows. Involved in protein export. Acts as a chaperone by maintaining the newly synthesized protein in an open conformation. Functions as a peptidyl-prolyl cis-trans isomerase. The sequence is that of Trigger factor from Pseudomonas fluorescens (strain Pf0-1).